Reading from the N-terminus, the 212-residue chain is tRNA (guanine-N(7)-)-methyltransferase (212 aa).

Residues Glu44, Asp69, Asp96, and Asp118 each contribute to the S-adenosyl-L-methionine site. The active site involves Asp118. Lys122 provides a ligand contact to substrate. The segment at 124–129 is interaction with RNA; sequence RHEKRR. Substrate contacts are provided by residues Asp154 and 191 to 194; that span reads TEYE.

Belongs to the class I-like SAM-binding methyltransferase superfamily. TrmB family.

The enzyme catalyses guanosine(46) in tRNA + S-adenosyl-L-methionine = N(7)-methylguanosine(46) in tRNA + S-adenosyl-L-homocysteine. Its pathway is tRNA modification; N(7)-methylguanine-tRNA biosynthesis. In terms of biological role, catalyzes the formation of N(7)-methylguanine at position 46 (m7G46) in tRNA. The protein is tRNA (guanine-N(7)-)-methyltransferase of Streptococcus sanguinis (strain SK36).